The following is a 320-amino-acid chain: tRNA dimethylallyltransferase (320 aa).

ATP is bound at residue G17–T24. T19–T24 provides a ligand contact to substrate. The segment at D42 to Q45 is interaction with substrate tRNA.

This sequence belongs to the IPP transferase family. As to quaternary structure, monomer. Mg(2+) is required as a cofactor.

It carries out the reaction adenosine(37) in tRNA + dimethylallyl diphosphate = N(6)-dimethylallyladenosine(37) in tRNA + diphosphate. Functionally, catalyzes the transfer of a dimethylallyl group onto the adenine at position 37 in tRNAs that read codons beginning with uridine, leading to the formation of N6-(dimethylallyl)adenosine (i(6)A). The polypeptide is tRNA dimethylallyltransferase (Bacillus thuringiensis (strain Al Hakam)).